Consider the following 151-residue polypeptide: Transcriptional regulator MraZ (151 aa).

SpoVT-AbrB domains are found at residues 5-52 (ANAI…PLDE) and 81-124 (AVDL…DEDA).

It belongs to the MraZ family. As to quaternary structure, forms oligomers.

Its subcellular location is the cytoplasm. The protein localises to the nucleoid. The protein is Transcriptional regulator MraZ of Pseudomonas fluorescens (strain ATCC BAA-477 / NRRL B-23932 / Pf-5).